The following is a 382-amino-acid chain: ATP phosphoribosyltransferase regulatory subunit (382 aa).

The protein belongs to the class-II aminoacyl-tRNA synthetase family. HisZ subfamily. Heteromultimer composed of HisG and HisZ subunits.

Its subcellular location is the cytoplasm. It participates in amino-acid biosynthesis; L-histidine biosynthesis; L-histidine from 5-phospho-alpha-D-ribose 1-diphosphate: step 1/9. Functionally, required for the first step of histidine biosynthesis. May allow the feedback regulation of ATP phosphoribosyltransferase activity by histidine. This Burkholderia pseudomallei (strain 1106a) protein is ATP phosphoribosyltransferase regulatory subunit.